Consider the following 718-residue polypeptide: Pullulanase (718 aa).

Asp406 (nucleophile) is an active-site residue. Glu435 acts as the Proton donor in catalysis.

It belongs to the glycosyl hydrolase 13 family.

It catalyses the reaction Hydrolysis of (1-&gt;6)-alpha-D-glucosidic linkages in pullulan, amylopectin and glycogen, and in the alpha- and beta-limit dextrins of amylopectin and glycogen.. The polypeptide is Pullulanase (amyX) (Bacillus subtilis (strain 168)).